A 706-amino-acid chain; its full sequence is uncharacterized protein (706 aa).

Coiled-coil stretches lie at residues 86 to 162 (TKNV…AKKI), 269 to 299 (DYLK…VNEL), and 337 to 427 (DDYI…QSDY).

This is an uncharacterized protein from Staphylococcus aureus (strain MRSA252).